Here is a 303-residue protein sequence, read N- to C-terminus: Tyrosine recombinase XerC (303 aa).

The region spanning 6-92 is the Core-binding (CB) domain; it reads ASLAPQVEAF…ALRSFLNWLV (87 aa). Residues 113 to 292 form the Tyr recombinase domain; it reads HLPKNIDVDE…DFQHLATVYD (180 aa). Active-site residues include Arg-152, Lys-176, His-244, Arg-247, and His-270. Tyr-279 serves as the catalytic O-(3'-phospho-DNA)-tyrosine intermediate.

The protein belongs to the 'phage' integrase family. XerC subfamily. In terms of assembly, forms a cyclic heterotetrameric complex composed of two molecules of XerC and two molecules of XerD, in which XerC interacts with XerD via its C-terminal region, XerD interacts with XerC via its C-terminal region and so on.

The protein localises to the cytoplasm. FtsK may regulate the catalytic switch between XerC and XerD in the heterotetrameric complex during the two steps of the recombination process. Site-specific tyrosine recombinase, which acts by catalyzing the cutting and rejoining of the recombining DNA molecules. Binds cooperatively to specific DNA consensus sequences that are separated from XerD binding sites by a short central region, forming the heterotetrameric XerC-XerD complex that recombines DNA substrates. The complex is essential to convert dimers of the bacterial chromosome into monomers to permit their segregation at cell division. It also contributes to the segregational stability of plasmids. In the complex XerC specifically exchanges the top DNA strands. The sequence is that of Tyrosine recombinase XerC from Yersinia pestis.